Consider the following 220-residue polypeptide: MAYRDQPLGELALSIPRASALFRKYDMDYCCGGKQTLSRAAARKELDVEVIEAELAKLAEQPIEKDWRSAPLAEIIDHIIVRYHDRHREQLPELILQATKVERVHADKPSVPKGLTKYLTMLHEELSSHMMKEEQILFPMIKQGMGSQAMGPISVMESEHDEAGELLEVIKHTTNNVTPPPEACTTWKAMYNGINELIDDLMDHISLENNVLFPRALAGE.

It belongs to the RIC family. YtfE subfamily. Homodimer.

The protein resides in the cytoplasm. Its function is as follows. Di-iron-containing protein involved in the repair of iron-sulfur clusters damaged by oxidative and nitrosative stress conditions. This chain is Iron-sulfur cluster repair protein YtfE, found in Escherichia coli O8 (strain IAI1).